We begin with the raw amino-acid sequence, 212 residues long: Casparian strip membrane protein 1 (212 aa).

The interval 1 to 28 is disordered; the sequence is MDSSNSTKETGDIPIPVTSSKSSKAAPP. Residues 1-49 are Cytoplasmic-facing; it reads MDSSNSTKETGDIPIPVTSSKSSKAAPPPVVAAKAKSTTKQPLVSGWKR. Over residues 16–28 the composition is skewed to low complexity; it reads PVTSSKSSKAAPP. The chain crosses the membrane as a helical span at residues 50–70; the sequence is GLGIIDFILRICAIAAALAAA. Over 71 to 100 the chain is Extracellular; it reads TAMGTTSQQLPFFTQFFQFKADYNDLPAFT. A helical membrane pass occupies residues 101–121; that stretch reads FFVIANAMAGAYLVLSLPFSI. Over 122–133 the chain is Cytoplasmic; that stretch reads LCIVRPHILGAR. A helical transmembrane segment spans residues 134-154; it reads LMLLVFDTVAVPLVTAAASAA. Topologically, residues 155–186 are extracellular; it reads ASIVYLAHNGNSDANWVAICRQFNDFCQRVSG. The chain crosses the membrane as a helical span at residues 187 to 207; that stretch reads AVVASFITALLFVVLVAVSAV. Residues 208–212 lie on the Cytoplasmic side of the membrane; sequence ALRQK.

It belongs to the Casparian strip membrane proteins (CASP) family. Homodimer and heterodimers.

The protein localises to the cell membrane. Regulates membrane-cell wall junctions and localized cell wall deposition. Required for establishment of the Casparian strip membrane domain (CSD) and the subsequent formation of Casparian strips, a cell wall modification of the root endodermis that determines an apoplastic barrier between the intraorganismal apoplasm and the extraorganismal apoplasm and prevents lateral diffusion. The sequence is that of Casparian strip membrane protein 1 from Helianthus annuus (Common sunflower).